A 344-amino-acid polypeptide reads, in one-letter code: Transcription factor AIG1 (344 aa).

The 50-residue stretch at 131–180 folds into the bHLH domain; it reads AASKSHSEAERRRRERINTHLAKLRSILPNTTKTDKASLLAEVIQHMKEL. Residues 313 to 344 are disordered; that stretch reads NDESNDNNNLEKSSSGGIKRQRTSKMVNRCYN. Over residues 318–327 the composition is skewed to low complexity; sequence DNNNLEKSSS.

As to quaternary structure, homodimer. Interacts with LHW.

It localises to the nucleus. In terms of biological role, transcription factor required for MONOPTEROS-dependent root initiation in embryo. Transcriptionally controlled by MONOPTEROS. The chain is Transcription factor AIG1 (BHLH32) from Arabidopsis thaliana (Mouse-ear cress).